We begin with the raw amino-acid sequence, 146 residues long: MFRASSFHTIDPKGRIIVPARFRDDIRAGGADGVMVSILDKALYAYTFNEWQAIEKKILSAKSEPMRRFKRFFLGNACECLCDKQGRILIPPSIRAYAGLEKEIVLVGMLDHFEIWSREQWDRENNLMEEELEKKEVREAIASLGL.

2 consecutive SpoVT-AbrB domains span residues 5–50 (SSFH…TFNE) and 77–120 (ACEC…SREQ).

Belongs to the MraZ family. In terms of assembly, forms oligomers.

Its subcellular location is the cytoplasm. It is found in the nucleoid. This is Transcriptional regulator MraZ from Desulforapulum autotrophicum (strain ATCC 43914 / DSM 3382 / VKM B-1955 / HRM2) (Desulfobacterium autotrophicum).